The sequence spans 521 residues: Probable glycine dehydrogenase (decarboxylating) subunit 2 (521 aa).

At lysine 279 the chain carries N6-(pyridoxal phosphate)lysine.

The protein belongs to the GcvP family. C-terminal subunit subfamily. The glycine cleavage system is composed of four proteins: P, T, L and H. In this organism, the P 'protein' is a heterodimer of two subunits. It depends on pyridoxal 5'-phosphate as a cofactor.

The enzyme catalyses N(6)-[(R)-lipoyl]-L-lysyl-[glycine-cleavage complex H protein] + glycine + H(+) = N(6)-[(R)-S(8)-aminomethyldihydrolipoyl]-L-lysyl-[glycine-cleavage complex H protein] + CO2. Functionally, the glycine cleavage system catalyzes the degradation of glycine. The P protein binds the alpha-amino group of glycine through its pyridoxal phosphate cofactor; CO(2) is released and the remaining methylamine moiety is then transferred to the lipoamide cofactor of the H protein. This Staphylothermus marinus (strain ATCC 43588 / DSM 3639 / JCM 9404 / F1) protein is Probable glycine dehydrogenase (decarboxylating) subunit 2.